Here is a 187-residue protein sequence, read N- to C-terminus: Protein GrpE (187 aa).

The segment covering 1 to 17 (MSNEEQQQPNPAAQAPE) has biased composition (low complexity). A disordered region spans residues 1–27 (MSNEEQQQPNPAAQAPEGAVTEGAAPE).

This sequence belongs to the GrpE family. In terms of assembly, homodimer.

The protein resides in the cytoplasm. Participates actively in the response to hyperosmotic and heat shock by preventing the aggregation of stress-denatured proteins, in association with DnaK and GrpE. It is the nucleotide exchange factor for DnaK and may function as a thermosensor. Unfolded proteins bind initially to DnaJ; upon interaction with the DnaJ-bound protein, DnaK hydrolyzes its bound ATP, resulting in the formation of a stable complex. GrpE releases ADP from DnaK; ATP binding to DnaK triggers the release of the substrate protein, thus completing the reaction cycle. Several rounds of ATP-dependent interactions between DnaJ, DnaK and GrpE are required for fully efficient folding. The chain is Protein GrpE from Thioalkalivibrio sulfidiphilus (strain HL-EbGR7).